A 152-amino-acid polypeptide reads, in one-letter code: Transcriptional regulator MraZ (152 aa).

SpoVT-AbrB domains follow at residues 5–52 and 81–124; these read ANAI…PLNE and ATES…DEDM.

This sequence belongs to the MraZ family. As to quaternary structure, forms oligomers.

The protein localises to the cytoplasm. The protein resides in the nucleoid. This is Transcriptional regulator MraZ from Psychromonas ingrahamii (strain DSM 17664 / CCUG 51855 / 37).